We begin with the raw amino-acid sequence, 357 residues long: Uroporphyrinogen decarboxylase (357 aa).

Substrate contacts are provided by residues 27 to 31 (RQAGR), D77, Y154, S209, and H330.

This sequence belongs to the uroporphyrinogen decarboxylase family. As to quaternary structure, homodimer.

It localises to the cytoplasm. It carries out the reaction uroporphyrinogen III + 4 H(+) = coproporphyrinogen III + 4 CO2. The protein operates within porphyrin-containing compound metabolism; protoporphyrin-IX biosynthesis; coproporphyrinogen-III from 5-aminolevulinate: step 4/4. In terms of biological role, catalyzes the decarboxylation of four acetate groups of uroporphyrinogen-III to yield coproporphyrinogen-III. The polypeptide is Uroporphyrinogen decarboxylase (Acinetobacter baumannii (strain AB0057)).